The primary structure comprises 707 residues: Nucleolin (707 aa).

Residues 1-308 (MVKLAKAGKT…KVEGSEPTTP (308 aa)) form a disordered region. Lys-9, Lys-15, and Lys-16 each carry N6-acetyllysine. Residues 24-46 (VEEDSEDEEMSEDEDDSSGEEEV) are compositionally biased toward acidic residues. A phosphoserine mark is found at Ser-28, Ser-34, Ser-40, and Ser-41. A compositionally biased stretch (low complexity) spans 56-92 (ATTTPAKKVVVSQTKKAAVPTPAKKAAVTPGKKAVAT). Copy 1 of the repeat occupies 58–65 (TTPAKKVV). Positions 58–135 (TTPAKKVVVS…GAATPAKGAK (78 aa)) are 8 X 8 AA tandem repeats of X-T-P-X-K-K-X-X. Ser-67 carries the phosphoserine modification. Thr-69, Thr-76, Thr-84, and Thr-92 each carry phosphothreonine. 3 consecutive repeat copies span residues 75–82 (PTPAKKAA), 83–90 (VTPGKKAV), and 91–98 (ATPAKKNI). Lys-96 is subject to N6-acetyllysine. Thr-99 carries the post-translational modification Phosphothreonine. The stretch at 99–104 (TPAKVI) is one 5; truncated repeat. N6-acetyllysine is present on Lys-102. Copy 6 of the repeat occupies 105–112 (PTPGKKGA). A Phosphothreonine modification is found at Thr-106. An N6-acetyllysine mark is found at Lys-109 and Lys-116. Tandem repeats lie at residues 120–127 (PTPGKKGA) and 128–135 (ATPAKGAK). Thr-121 is modified (phosphothreonine). Residues 121–137 (TPGKKGAATPAKGAKNG) are compositionally biased toward low complexity. Position 124 is an N6-acetyllysine (Lys-124). Phosphoserine is present on residues Ser-145 and Ser-157. Residues 145–170 (SDEDEDEEDEDDSDEDEDDEEEDEFE) are compositionally biased toward acidic residues. Over residues 179–188 (PAKAAPAAPA) the composition is skewed to low complexity. 2 positions are modified to phosphoserine: Ser-189 and Ser-212. The segment covering 189–217 (SEDEEDDEDEDDEEDDDEEEEDDSEEEVM) has biased composition (acidic residues). Thr-220 bears the Phosphothreonine mark. The segment covering 241 to 273 (EEEDDEEEDEDDEDEDDEEEDDEDDDEEEEEEE) has biased composition (acidic residues). Residues 286 to 302 (MTKQKEAPEAKKQKVEG) show a composition bias toward basic and acidic residues. Lys-299 is covalently cross-linked (Glycyl lysine isopeptide (Lys-Gly) (interchain with G-Cter in SUMO1); alternate). Lys-299 is covalently cross-linked (Glycyl lysine isopeptide (Lys-Gly) (interchain with G-Cter in SUMO2); alternate). Phosphoserine is present on Ser-303. RRM domains lie at 309-385 (FNLF…KPKG) and 395-468 (RTLL…YTGE). Lys-320 is subject to N6-acetyllysine. Lys-326 participates in a covalent cross-link: Glycyl lysine isopeptide (Lys-Gly) (interchain with G-Cter in SUMO1); alternate. Residue Lys-326 forms a Glycyl lysine isopeptide (Lys-Gly) (interchain with G-Cter in SUMO2); alternate linkage. The residue at position 350 (Lys-350) is an N6-acetyllysine. Ser-358 is modified (phosphoserine). At Thr-369 the chain carries Phosphothreonine. Lys-372 participates in a covalent cross-link: Glycyl lysine isopeptide (Lys-Gly) (interchain with G-Cter in SUMO2). Residue Lys-379 forms a Glycyl lysine isopeptide (Lys-Gly) (interchain with G-Cter in SUMO2); alternate linkage. N6-acetyllysine; alternate is present on Lys-379. Lys-400 is modified (N6-acetyllysine). Residue Ser-403 is modified to Phosphoserine. At Thr-407 the chain carries Phosphothreonine. N6-acetyllysine is present on residues Lys-429 and Lys-446. Residues Ser-460 and Ser-462 each carry the phosphoserine modification. 2 positions are modified to N6-acetyllysine: Lys-469 and Lys-478. RRM domains follow at residues 487–561 (KTLV…LQGS) and 569–644 (KTLF…WAKP). Residue Lys-514 forms a Glycyl lysine isopeptide (Lys-Gly) (interchain with G-Cter in SUMO2); alternate linkage. Lys-514 is modified (N6-acetyllysine; alternate). Residues Lys-522 and Lys-569 each carry the N6-acetyllysine modification. Residue Lys-574 forms a Glycyl lysine isopeptide (Lys-Gly) (interchain with G-Cter in SUMO2); alternate linkage. Lys-574 carries the N6-acetyllysine; alternate modification. Ser-577 bears the Phosphoserine mark. Lys-586 participates in a covalent cross-link: Glycyl lysine isopeptide (Lys-Gly) (interchain with G-Cter in SUMO1); alternate. Residue Lys-586 forms a Glycyl lysine isopeptide (Lys-Gly) (interchain with G-Cter in SUMO2); alternate linkage. A phosphoserine mark is found at Ser-588 and Ser-616. A Glycyl lysine isopeptide (Lys-Gly) (interchain with G-Cter in SUMO2) cross-link involves residue Lys-621. Residues 639–707 (LDWAKPKGEG…KPQGKKTKFE (69 aa)) form a disordered region. The residue at position 643 (Lys-643) is an N6-acetyllysine. Gly residues predominate over residues 647-696 (EGGFGGRGGGRGGFGGRGGGRGGRGGFGGRGRGGFGGRGGFRGGRGGGGD). 9 positions are modified to asymmetric dimethylarginine: Arg-653, Arg-657, Arg-663, Arg-667, Arg-670, Arg-676, Arg-678, Arg-684, and Arg-688. Residue Arg-691 is modified to Asymmetric dimethylarginine; alternate. Omega-N-methylarginine; alternate is present on Arg-691.

As to quaternary structure, identified in a IGF2BP1-dependent mRNP granule complex containing untranslated mRNAs. Component of the SWAP complex that consists of NPM1, NCL/nucleolin, PARP1 and SWAP70. Component of a complex which is at least composed of HTATSF1/Tat-SF1, the P-TEFb complex components CDK9 and CCNT1, RNA polymerase II, SUPT5H, and NCL/nucleolin. Interacts with AICDA. Interacts with APTX. Interacts with C1QBP. Interacts with ERBB4. Interacts (via C-terminus) with FMR1 isoform 6 (via N-terminus). Interacts with GZF1; this interaction is important for nucleolar localization of GZF1. Interacts with NSUN2. Interacts with NVL. Interacts (via N-terminus domain) with SETX. Interacts (via RRM1 and C-terminal RRM4/Arg/Gly-rich domains) with TERT; the interaction is important for nucleolar localization of TERT. Interacts with WDR46. Interacts with ZFP36. Interacts with LRRC34. Interacts with RRP1B. Interacts with HNRNPU; this interaction occurs during mitosis. Interacts with RIOK1; RIOK1 recruits NCL to PRMT5 for symmetrically methylation. Interacts with ZBTB7B. Interacts with MDK; this interaction promotes NCL clustering and lateral movements of this complex into lipid rafts leading to MDK internalization. Interacts with HDGF. Interacts with ALKBH2. Interacts with IGFBP5; this interaction is necessary for IGFBP5 localization to the nucleus. Interacts with DDX24 (when ubiquitinated); this interaction may be important during ribosome biogenesis. In terms of processing, some glutamate residues are glycylated by TTLL8. This modification occurs exclusively on glutamate residues and results in a glycine chain on the gamma-carboxyl group. Post-translationally, symmetrically methylated by PRMT5. Expressed in B-cells that have been induced to switch to various Ig isotypes.

The protein resides in the nucleus. It localises to the nucleolus. Its subcellular location is the cytoplasm. In terms of biological role, nucleolin is the major nucleolar protein of growing eukaryotic cells. It is found associated with intranucleolar chromatin and pre-ribosomal particles. It induces chromatin decondensation by binding to histone H1. It is thought to play a role in pre-rRNA transcription and ribosome assembly. May play a role in the process of transcriptional elongation. Binds RNA oligonucleotides with 5'-UUAGGG-3' repeats more tightly than the telomeric single-stranded DNA 5'-TTAGGG-3' repeats. The sequence is that of Nucleolin (Ncl) from Mus musculus (Mouse).